The chain runs to 230 residues: NAD-dependent protein deacylase 1 (230 aa).

In terms of domain architecture, Deacetylase sirtuin-type spans 1 to 226 (MESGIPTYRE…SHLSAFLSRE (226 aa)). Y41 and R44 together coordinate substrate. Position 75–78 (75–78 (QNID)) interacts with NAD(+). H93 (proton acceptor) is an active-site residue. Residues C101, C104, C128, and C131 each contribute to the Zn(2+) site. NAD(+) is bound by residues 168-170 (GTS), 194-196 (NTV), and A212.

Belongs to the sirtuin family. Class III subfamily. The cofactor is Zn(2+).

It is found in the cytoplasm. The catalysed reaction is N(6)-acetyl-L-lysyl-[protein] + NAD(+) + H2O = 2''-O-acetyl-ADP-D-ribose + nicotinamide + L-lysyl-[protein]. It carries out the reaction N(6)-succinyl-L-lysyl-[protein] + NAD(+) + H2O = 2''-O-succinyl-ADP-D-ribose + nicotinamide + L-lysyl-[protein]. NAD-dependent lysine deacetylase and desuccinylase that specifically removes acetyl and succinyl groups on target proteins. Modulates the activities of several proteins which are inactive in their acylated form. The sequence is that of NAD-dependent protein deacylase 1 from Pseudomonas syringae pv. tomato (strain ATCC BAA-871 / DC3000).